A 350-amino-acid polypeptide reads, in one-letter code: Methionine import ATP-binding protein MetN (350 aa).

The 237-residue stretch at 9 to 245 folds into the ABC transporter domain; sequence LKDVDVEFHG…PQQQLTKDFI (237 aa). An ATP-binding site is contributed by 43-50; that stretch reads GYSGAGKS.

This sequence belongs to the ABC transporter superfamily. Methionine importer (TC 3.A.1.24) family. In terms of assembly, the complex is composed of two ATP-binding proteins (MetN), two transmembrane proteins (MetI) and a solute-binding protein (MetQ).

It is found in the cell membrane. The catalysed reaction is L-methionine(out) + ATP + H2O = L-methionine(in) + ADP + phosphate + H(+). The enzyme catalyses D-methionine(out) + ATP + H2O = D-methionine(in) + ADP + phosphate + H(+). Functionally, part of the ABC transporter complex MetNIQ involved in methionine import. Responsible for energy coupling to the transport system. This chain is Methionine import ATP-binding protein MetN, found in Lacticaseibacillus paracasei (strain ATCC 334 / BCRC 17002 / CCUG 31169 / CIP 107868 / KCTC 3260 / NRRL B-441) (Lactobacillus paracasei).